The chain runs to 241 residues: Phosphoadenosine 5'-phosphosulfate reductase (241 aa).

Cys-235 functions as the Nucleophile; cysteine thiosulfonate intermediate in the catalytic mechanism.

It belongs to the PAPS reductase family. CysH subfamily.

The protein resides in the cytoplasm. The enzyme catalyses [thioredoxin]-disulfide + sulfite + adenosine 3',5'-bisphosphate + 2 H(+) = [thioredoxin]-dithiol + 3'-phosphoadenylyl sulfate. It participates in sulfur metabolism; hydrogen sulfide biosynthesis; sulfite from sulfate: step 3/3. Catalyzes the formation of sulfite from phosphoadenosine 5'-phosphosulfate (PAPS) using thioredoxin as an electron donor. The sequence is that of Phosphoadenosine 5'-phosphosulfate reductase from Xanthomonas campestris pv. campestris (strain 8004).